The following is a 179-amino-acid chain: GTP-dependent dephospho-CoA kinase (179 aa).

Positions 49, 50, 51, 68, 70, and 126 each coordinate GTP.

Belongs to the GTP-dependent DPCK family.

The catalysed reaction is 3'-dephospho-CoA + GTP = GDP + CoA + H(+). It participates in cofactor biosynthesis; coenzyme A biosynthesis. In terms of biological role, catalyzes the GTP-dependent phosphorylation of the 3'-hydroxyl group of dephosphocoenzyme A to form coenzyme A (CoA). The protein is GTP-dependent dephospho-CoA kinase of Pyrococcus abyssi (strain GE5 / Orsay).